The sequence spans 227 residues: Pyridoxine/pyridoxamine 5'-phosphate oxidase (227 aa).

Substrate-binding positions include 23 to 26 (RREY) and lysine 81. Residues 76-81 (RIVLLK), 91-92 (YT), arginine 97, lysine 98, and glutamine 120 contribute to the FMN site. 3 residues coordinate substrate: tyrosine 138, arginine 142, and serine 146. Residues 155–156 (QS) and tryptophan 200 contribute to the FMN site. Substrate is bound at residue 206 to 208 (RLH). Residue arginine 210 participates in FMN binding.

Belongs to the pyridoxamine 5'-phosphate oxidase family. As to quaternary structure, homodimer. Requires FMN as cofactor.

It catalyses the reaction pyridoxamine 5'-phosphate + O2 + H2O = pyridoxal 5'-phosphate + H2O2 + NH4(+). The catalysed reaction is pyridoxine 5'-phosphate + O2 = pyridoxal 5'-phosphate + H2O2. Its pathway is cofactor metabolism; pyridoxal 5'-phosphate salvage; pyridoxal 5'-phosphate from pyridoxamine 5'-phosphate: step 1/1. It functions in the pathway cofactor metabolism; pyridoxal 5'-phosphate salvage; pyridoxal 5'-phosphate from pyridoxine 5'-phosphate: step 1/1. Functionally, catalyzes the oxidation of either pyridoxine 5'-phosphate (PNP) or pyridoxamine 5'-phosphate (PMP) into pyridoxal 5'-phosphate (PLP). The protein is Pyridoxine/pyridoxamine 5'-phosphate oxidase of Pectobacterium atrosepticum (strain SCRI 1043 / ATCC BAA-672) (Erwinia carotovora subsp. atroseptica).